A 41-amino-acid chain; its full sequence is uncharacterized protein (41 aa).

This is an uncharacterized protein from Saccharomyces cerevisiae (strain ATCC 204508 / S288c) (Baker's yeast).